An 89-amino-acid chain; its full sequence is Small ribosomal subunit protein uS15 (89 aa).

It belongs to the universal ribosomal protein uS15 family. In terms of assembly, part of the 30S ribosomal subunit. Forms a bridge to the 50S subunit in the 70S ribosome, contacting the 23S rRNA.

One of the primary rRNA binding proteins, it binds directly to 16S rRNA where it helps nucleate assembly of the platform of the 30S subunit by binding and bridging several RNA helices of the 16S rRNA. Functionally, forms an intersubunit bridge (bridge B4) with the 23S rRNA of the 50S subunit in the ribosome. The chain is Small ribosomal subunit protein uS15 from Sulfurovum sp. (strain NBC37-1).